A 570-amino-acid polypeptide reads, in one-letter code: 2-isopropylmalate synthase (570 aa).

In terms of domain architecture, Pyruvate carboxyltransferase spans P31–N305. D40, H244, H246, and N280 together coordinate Mg(2+). A regulatory domain region spans residues S437–A570.

Belongs to the alpha-IPM synthase/homocitrate synthase family. LeuA type 2 subfamily. Homodimer. Requires Mg(2+) as cofactor.

The protein localises to the cytoplasm. It carries out the reaction 3-methyl-2-oxobutanoate + acetyl-CoA + H2O = (2S)-2-isopropylmalate + CoA + H(+). The protein operates within amino-acid biosynthesis; L-leucine biosynthesis; L-leucine from 3-methyl-2-oxobutanoate: step 1/4. Functionally, catalyzes the condensation of the acetyl group of acetyl-CoA with 3-methyl-2-oxobutanoate (2-ketoisovalerate) to form 3-carboxy-3-hydroxy-4-methylpentanoate (2-isopropylmalate). The chain is 2-isopropylmalate synthase from Ralstonia pickettii (strain 12J).